The primary structure comprises 88 residues: UPF0297 protein SGO_2042 (88 aa).

The protein belongs to the UPF0297 family.

The chain is UPF0297 protein SGO_2042 from Streptococcus gordonii (strain Challis / ATCC 35105 / BCRC 15272 / CH1 / DL1 / V288).